An 882-amino-acid polypeptide reads, in one-letter code: MPGRARTRARGRARRRESYQQEAPGGPRAPGSATTQEPPQLQSTPRPLQEEVPVVRPLQPRAARGGAGGGAQSQGVKEPGPEAGLHTAPLQERRIGGVFQDLVVNTRQDMKHVKDSKTGSEGTVVQLLANHFRVISRPQWVAYKYNVDYKPDIEDGNLRTILLDQHRRKFGERHIFDGNSLLLSRPLKERRVEWLSTTKDKNIVKITVEFSKELTPTSPDCLRYYNILFRRTFKLLDFEQVGRNYYTKKKAIQLYRHGTSLEIWLGYVTSVLQYENSITLCADVSHKLLRIETAYDFIKRTSAQAQTGNIREEVTNKLIGSIVLTKYNNKTYRVDDIDWKQNPEDTFNKSDGSKITYIDYYRQQHKEIVTVKKQPLLVSQGRWKKGLTGTQREPILLIPQLCHMTGLTDEICKDYSIVKELAKHTRLSPRRRHHTLKEFINTLQDNKKVRELLQLWDLKFDTNFLSVPGRVLKNANIVQGRRMVKANSQGDWSREIRELPLLNAMPLHSWLILYSRSSHREAMSLKGHLQSVTAPMGITMKPAEMIEVDGDANSYIDTLRKYTRPTLQMGMSCLLVFKVICILPNDDKRRYDSIKRYLCTKCPIPSQCVVKKTLEKVQARTIVTKIAQQMNCKMGGALWKVETDVQRTMFVGIDCFHDIVNRQKSIAGFVASTNAELTKWYSQCVIQKTGEELVKELEICLKAALDVWCKNESSMPHSVIVYRDGVGDGQLQALLDHEAKKMSTYLKTISPNNFTLAFIVVKKRINTRFFLKHGSNFQNPPPGTVIDVELTRNEWYDFFIVSQSVQDGTVTPTHYNVIYDTIGLSPDTVQRLTYCLCHMYYNLPGIIRVPAPCHYAHKLAYLVGQSIHQEPNRSLSTRLFYL.

The segment covering methionine 1–arginine 15 has biased composition (basic residues). Residues methionine 1–glutamine 91 are disordered. Residues serine 32 to arginine 46 are compositionally biased toward polar residues. The PAZ domain maps to threonine 293–glycine 406. The Piwi domain maps to lysine 578–histidine 868.

Belongs to the argonaute family. Piwi subfamily. As to expression, expressed in testis.

The protein localises to the cytoplasm. In terms of biological role, may play a role during spermatogenesis by repressing transposable elements and preventing their mobilization, which is essential for the germline integrity. Acts via the piRNA metabolic process, which mediates the repression of transposable elements during meiosis by forming complexes composed of piRNAs and Piwi proteins and govern the methylation and subsequent repression of transposons. Directly binds piRNAs, a class of 24 to 30 nucleotide RNAs that are generated by a Dicer-independent mechanism and are primarily derived from transposons and other repeated sequence elements. Besides their function in transposable elements repression, piRNAs are probably involved in other processes during meiosis such as translation regulation. The sequence is that of Piwi-like protein 3 (PIWIL3) from Homo sapiens (Human).